Reading from the N-terminus, the 153-residue chain is NAD(P)H-quinone oxidoreductase subunit N (153 aa).

The protein belongs to the complex I NdhN subunit family. In terms of assembly, NDH-1 can be composed of about 15 different subunits; different subcomplexes with different compositions have been identified which probably have different functions.

The protein localises to the cellular thylakoid membrane. The enzyme catalyses a plastoquinone + NADH + (n+1) H(+)(in) = a plastoquinol + NAD(+) + n H(+)(out). It catalyses the reaction a plastoquinone + NADPH + (n+1) H(+)(in) = a plastoquinol + NADP(+) + n H(+)(out). Functionally, NDH-1 shuttles electrons from an unknown electron donor, via FMN and iron-sulfur (Fe-S) centers, to quinones in the respiratory and/or the photosynthetic chain. The immediate electron acceptor for the enzyme in this species is believed to be plastoquinone. Couples the redox reaction to proton translocation, and thus conserves the redox energy in a proton gradient. Cyanobacterial NDH-1 also plays a role in inorganic carbon-concentration. This is NAD(P)H-quinone oxidoreductase subunit N from Synechococcus sp. (strain RCC307).